A 39-amino-acid chain; its full sequence is Photosystem II reaction center protein J (39 aa).

A helical transmembrane segment spans residues 9 to 29; sequence LWLVATVGGMAAITVLGIFIY.

It belongs to the PsbJ family. As to quaternary structure, PSII is composed of 1 copy each of membrane proteins PsbA, PsbB, PsbC, PsbD, PsbE, PsbF, PsbH, PsbI, PsbJ, PsbK, PsbL, PsbM, PsbT, PsbX, PsbY, PsbZ, Psb30/Ycf12, at least 3 peripheral proteins of the oxygen-evolving complex and a large number of cofactors. It forms dimeric complexes.

It is found in the plastid. The protein resides in the chloroplast thylakoid membrane. Its function is as follows. One of the components of the core complex of photosystem II (PSII). PSII is a light-driven water:plastoquinone oxidoreductase that uses light energy to abstract electrons from H(2)O, generating O(2) and a proton gradient subsequently used for ATP formation. It consists of a core antenna complex that captures photons, and an electron transfer chain that converts photonic excitation into a charge separation. This chain is Photosystem II reaction center protein J, found in Porphyra purpurea (Red seaweed).